We begin with the raw amino-acid sequence, 200 residues long: Cytochrome c biogenesis ATP-binding export protein CcmA (200 aa).

The ABC transporter domain occupies 3-200 (LSGRGLRCVR…AREMRIGAAA (198 aa)). Position 35-42 (35-42 (GHNGAGKT)) interacts with ATP.

Belongs to the ABC transporter superfamily. CcmA exporter (TC 3.A.1.107) family. The complex is composed of two ATP-binding proteins (CcmA) and two transmembrane proteins (CcmB).

Its subcellular location is the cell inner membrane. It carries out the reaction heme b(in) + ATP + H2O = heme b(out) + ADP + phosphate + H(+). Part of the ABC transporter complex CcmAB involved in the biogenesis of c-type cytochromes; once thought to export heme, this seems not to be the case, but its exact role is uncertain. Responsible for energy coupling to the transport system. This chain is Cytochrome c biogenesis ATP-binding export protein CcmA, found in Rhodopseudomonas palustris (strain BisB5).